The sequence spans 642 residues: 1-deoxy-D-xylulose-5-phosphate synthase 2 (642 aa).

Thiamine diphosphate-binding positions include H73 and 113 to 115 (SHA). Residue D144 participates in Mg(2+) binding. Thiamine diphosphate-binding positions include 145–146 (GA), N174, Y285, and E366. N174 is a binding site for Mg(2+).

Belongs to the transketolase family. DXPS subfamily. Homodimer. Requires Mg(2+) as cofactor. Thiamine diphosphate serves as cofactor.

It carries out the reaction D-glyceraldehyde 3-phosphate + pyruvate + H(+) = 1-deoxy-D-xylulose 5-phosphate + CO2. The protein operates within metabolic intermediate biosynthesis; 1-deoxy-D-xylulose 5-phosphate biosynthesis; 1-deoxy-D-xylulose 5-phosphate from D-glyceraldehyde 3-phosphate and pyruvate: step 1/1. In terms of biological role, catalyzes the acyloin condensation reaction between C atoms 2 and 3 of pyruvate and glyceraldehyde 3-phosphate to yield 1-deoxy-D-xylulose-5-phosphate (DXP). The chain is 1-deoxy-D-xylulose-5-phosphate synthase 2 from Streptomyces avermitilis (strain ATCC 31267 / DSM 46492 / JCM 5070 / NBRC 14893 / NCIMB 12804 / NRRL 8165 / MA-4680).